A 347-amino-acid polypeptide reads, in one-letter code: Heat-inducible transcription repressor HrcA (347 aa).

The protein belongs to the HrcA family.

Negative regulator of class I heat shock genes (grpE-dnaK-dnaJ and groELS operons). Prevents heat-shock induction of these operons. In Nocardia farcinica (strain IFM 10152), this protein is Heat-inducible transcription repressor HrcA.